A 116-amino-acid chain; its full sequence is UPF0482 protein PC1_2049 (116 aa).

Positions 1-31 are cleaved as a signal peptide; sequence MNHYSFSSLIRAFIPLSLVIVSAAWQPAALA.

The protein belongs to the UPF0482 family.

The protein is UPF0482 protein PC1_2049 of Pectobacterium carotovorum subsp. carotovorum (strain PC1).